A 112-amino-acid chain; its full sequence is Low molecular weight protein antigen 6 (112 aa).

The protein localises to the secreted. The protein is Low molecular weight protein antigen 6 (cfp6) of Mycobacterium bovis (strain ATCC BAA-935 / AF2122/97).